We begin with the raw amino-acid sequence, 181 residues long: RNA pyrophosphohydrolase (181 aa).

The Nudix hydrolase domain maps to 6-148 (GFRPNVGIIV…KRQVYRQALQ (143 aa)). The Nudix box signature appears at 38–59 (GGVEANETPLEALYRELREEVG).

The protein belongs to the Nudix hydrolase family. RppH subfamily. Requires a divalent metal cation as cofactor.

In terms of biological role, accelerates the degradation of transcripts by removing pyrophosphate from the 5'-end of triphosphorylated RNA, leading to a more labile monophosphorylated state that can stimulate subsequent ribonuclease cleavage. The polypeptide is RNA pyrophosphohydrolase (Halorhodospira halophila (strain DSM 244 / SL1) (Ectothiorhodospira halophila (strain DSM 244 / SL1))).